A 192-amino-acid chain; its full sequence is Phosphoheptose isomerase (192 aa).

The SIS domain occupies 34-192 (VVDAYRAGNK…VERELFLKGN (159 aa)). 49–51 (NGG) is a substrate binding site. 2 residues coordinate Zn(2+): His58 and Glu62. Substrate is bound by residues Glu62, 91–92 (ND), 117–119 (STS), Ser122, and Gln169. Gln169 and His177 together coordinate Zn(2+).

Belongs to the SIS family. GmhA subfamily. As to quaternary structure, homotetramer. The cofactor is Zn(2+).

The protein resides in the cytoplasm. It catalyses the reaction 2 D-sedoheptulose 7-phosphate = D-glycero-alpha-D-manno-heptose 7-phosphate + D-glycero-beta-D-manno-heptose 7-phosphate. It functions in the pathway carbohydrate biosynthesis; D-glycero-D-manno-heptose 7-phosphate biosynthesis; D-glycero-alpha-D-manno-heptose 7-phosphate and D-glycero-beta-D-manno-heptose 7-phosphate from sedoheptulose 7-phosphate: step 1/1. Catalyzes the isomerization of sedoheptulose 7-phosphate in D-glycero-D-manno-heptose 7-phosphate. This chain is Phosphoheptose isomerase, found in Geobacter sp. (strain M21).